Reading from the N-terminus, the 75-residue chain is MFTMKKPLLFLFFLGTISLSFCEEERGADEDDEVEMTEEEKRGLRDKIKNVAIDVAKGAGTGVLKALLCQLDKSC.

Residues 1–22 form the signal peptide; the sequence is MFTMKKPLLFLFFLGTISLSFC. Positions 23-40 are cleaved as a propeptide — removed in mature form; the sequence is EEERGADEDDEVEMTEEE. Cysteines 69 and 75 form a disulfide.

This sequence belongs to the frog skin active peptide (FSAP) family. Brevinin subfamily. As to expression, expressed by the skin glands.

The protein resides in the secreted. Its function is as follows. Antimicrobial peptide. Active against some Gram-negative and a variety of Gram-positive bacterial strains. Active against fungus C.glabrata 090902 but not against C.albicans ATCC 10231. Shows hemolytic activity against human erythrocytes. The chain is Brevinin-2SN1 from Sylvirana spinulosa (Fine-spined frog).